The chain runs to 741 residues: Ethylene receptor 2 (741 aa).

The next 3 membrane-spanning stretches (helical) occupy residues 23-43 (ISDFFIAIAYFSIPLELIYFV), 53-73 (WVLVQFGAFIVLCGATHLINL), and 92-112 (IMTAVVSCATALMLVHIIPDL). Residues cysteine 65 and histidine 69 each contribute to the Cu cation site. One can recognise a GAF domain in the interval 158–307 (DRHTILKTTL…VVADQVAVAL (150 aa)). Residues 350–589 (VMNHEMRTPM…TFVVKLGIPE (240 aa)) form the Histidine kinase domain. Phosphohistidine; by autocatalysis is present on histidine 353. The Response regulatory domain occupies 615-732 (KVLLLDDNGV…KMRNVLSNLL (118 aa)). Aspartate 663 carries the post-translational modification 4-aspartylphosphate.

The protein belongs to the ethylene receptor family. Homodimer; disulfide-linked. The cofactor is Cu cation. Activation probably requires a transfer of a phosphate group between a His in the transmitter domain and an Asp of the receiver domain.

Its subcellular location is the endoplasmic reticulum membrane. It catalyses the reaction ATP + protein L-histidine = ADP + protein N-phospho-L-histidine.. May act early in the ethylene signal transduction pathway, possibly as an ethylene receptor, or as a regulator of the pathway. The chain is Ethylene receptor 2 (ETR2) from Pelargonium hortorum (Common geranium).